Consider the following 119-residue polypeptide: Large ribosomal subunit protein eL31z (119 aa).

It belongs to the eukaryotic ribosomal protein eL31 family.

This Arabidopsis thaliana (Mouse-ear cress) protein is Large ribosomal subunit protein eL31z (RPL31A).